A 476-amino-acid polypeptide reads, in one-letter code: Proline--tRNA ligase 2 (476 aa).

The protein belongs to the class-II aminoacyl-tRNA synthetase family. ProS type 3 subfamily. As to quaternary structure, homodimer.

Its subcellular location is the cytoplasm. The enzyme catalyses tRNA(Pro) + L-proline + ATP = L-prolyl-tRNA(Pro) + AMP + diphosphate. Its function is as follows. Catalyzes the attachment of proline to tRNA(Pro) in a two-step reaction: proline is first activated by ATP to form Pro-AMP and then transferred to the acceptor end of tRNA(Pro). The chain is Proline--tRNA ligase 2 from Bacillus thuringiensis (strain Al Hakam).